The sequence spans 632 residues: Chaperone protein HtpG (632 aa).

The interval 1–339 (MTQQTMSFQA…SSDLPLNVSR (339 aa)) is a; substrate-binding. The b stretch occupies residues 340-559 (EILQESRDVK…DNDMSGYLQR (220 aa)). The tract at residues 560–632 (MLKAAGQNAP…TNALLLSRAA (73 aa)) is c.

This sequence belongs to the heat shock protein 90 family. As to quaternary structure, homodimer.

It is found in the cytoplasm. Its function is as follows. Molecular chaperone. Has ATPase activity. This is Chaperone protein HtpG from Burkholderia thailandensis (strain ATCC 700388 / DSM 13276 / CCUG 48851 / CIP 106301 / E264).